Reading from the N-terminus, the 1117-residue chain is Cytospin-A (1117 aa).

Disordered stretches follow at residues methionine 1 to serine 176, serine 293 to glutamate 323, and serine 358 to glutamate 390. Low complexity predominate over residues threonine 45–alanine 90. Over residues threonine 93–lysine 117 the composition is skewed to polar residues. 2 stretches are compositionally biased toward basic and acidic residues: residues serine 120 to arginine 131 and threonine 158 to serine 171. Residues lysine 168–glutamine 280 adopt a coiled-coil conformation. The segment covering serine 293–glutamine 303 has biased composition (polar residues). Residues serine 358 to isoleucine 377 are compositionally biased toward low complexity. A phosphoserine mark is found at serine 384, serine 385, and serine 389. Coiled coils occupy residues alanine 394–leucine 449 and arginine 487–valine 807. A phosphoserine mark is found at serine 868, serine 881, and serine 887. The disordered stretch occupies residues arginine 919 to proline 1001. Basic and acidic residues predominate over residues arginine 946–serine 956. A compositionally biased stretch (low complexity) spans threonine 971–threonine 990. The region spanning glycine 1011 to glutamate 1116 is the Calponin-homology (CH) domain.

The protein belongs to the cytospin-A family. May interact with both microtubules and actin cytoskeleton.

The protein localises to the cytoplasm. Its subcellular location is the cytoskeleton. It is found in the spindle. The protein resides in the cell junction. It localises to the gap junction. Functionally, involved in cytokinesis and spindle organization. May play a role in actin cytoskeleton organization and microtubule stabilization and hence required for proper cell adhesion and migration. The sequence is that of Cytospin-A (SPECC1L) from Pan troglodytes (Chimpanzee).